A 500-amino-acid chain; its full sequence is Probable cytosol aminopeptidase (500 aa).

Lysine 262 and aspartate 267 together coordinate Mn(2+). Lysine 274 is an active-site residue. Positions 285, 344, and 346 each coordinate Mn(2+). The active site involves arginine 348.

This sequence belongs to the peptidase M17 family. Requires Mn(2+) as cofactor.

Its subcellular location is the cytoplasm. The enzyme catalyses Release of an N-terminal amino acid, Xaa-|-Yaa-, in which Xaa is preferably Leu, but may be other amino acids including Pro although not Arg or Lys, and Yaa may be Pro. Amino acid amides and methyl esters are also readily hydrolyzed, but rates on arylamides are exceedingly low.. It carries out the reaction Release of an N-terminal amino acid, preferentially leucine, but not glutamic or aspartic acids.. Presumably involved in the processing and regular turnover of intracellular proteins. Catalyzes the removal of unsubstituted N-terminal amino acids from various peptides. The polypeptide is Probable cytosol aminopeptidase (Ehrlichia ruminantium (strain Gardel)).